We begin with the raw amino-acid sequence, 1059 residues long: Carbamoyl phosphate synthase large chain (1059 aa).

Residues 1–401 (MPKRKDIQKI…SLLKACRSLE (401 aa)) are carboxyphosphate synthetic domain. 12 residues coordinate ATP: arginine 129, arginine 169, glycine 175, glycine 176, arginine 208, isoleucine 210, glutamate 215, glycine 241, isoleucine 242, histidine 243, glutamine 284, and glutamate 298. One can recognise an ATP-grasp 1 domain in the interval 133–327 (KQLMEELGQP…IAKLAAKIAV (195 aa)). Mg(2+)-binding residues include glutamine 284, glutamate 298, and asparagine 300. Mn(2+)-binding residues include glutamine 284, glutamate 298, and asparagine 300. The tract at residues 402-546 (VCVDHNELPA…YSTYGFENES (145 aa)) is oligomerization domain. The tract at residues 547–929 (VKSSKESVLV…ALYKAFEASY (383 aa)) is carbamoyl phosphate synthetic domain. Residues 671-861 (EQALKELDIP…MAQVATRLIL (191 aa)) form the ATP-grasp 2 domain. Arginine 707, serine 746, isoleucine 748, glutamate 752, glycine 777, valine 778, histidine 779, serine 780, glutamine 820, and glutamate 832 together coordinate ATP. Glutamine 820, glutamate 832, and asparagine 834 together coordinate Mg(2+). The Mn(2+) site is built by glutamine 820, glutamate 832, and asparagine 834. In terms of domain architecture, MGS-like spans 930-1059 (LHLPNFGNIV…ESRSFTTEAI (130 aa)). Residues 930–1059 (LHLPNFGNIV…ESRSFTTEAI (130 aa)) form an allosteric domain region.

Belongs to the CarB family. In terms of assembly, composed of two chains; the small (or glutamine) chain promotes the hydrolysis of glutamine to ammonia, which is used by the large (or ammonia) chain to synthesize carbamoyl phosphate. Tetramer of heterodimers (alpha,beta)4. The cofactor is Mg(2+). Mn(2+) serves as cofactor.

The catalysed reaction is hydrogencarbonate + L-glutamine + 2 ATP + H2O = carbamoyl phosphate + L-glutamate + 2 ADP + phosphate + 2 H(+). It carries out the reaction hydrogencarbonate + NH4(+) + 2 ATP = carbamoyl phosphate + 2 ADP + phosphate + 2 H(+). It participates in amino-acid biosynthesis; L-arginine biosynthesis; carbamoyl phosphate from bicarbonate: step 1/1. The protein operates within pyrimidine metabolism; UMP biosynthesis via de novo pathway; (S)-dihydroorotate from bicarbonate: step 1/3. In terms of biological role, large subunit of the glutamine-dependent carbamoyl phosphate synthetase (CPSase). CPSase catalyzes the formation of carbamoyl phosphate from the ammonia moiety of glutamine, carbonate, and phosphate donated by ATP, constituting the first step of 2 biosynthetic pathways, one leading to arginine and/or urea and the other to pyrimidine nucleotides. The large subunit (synthetase) binds the substrates ammonia (free or transferred from glutamine from the small subunit), hydrogencarbonate and ATP and carries out an ATP-coupled ligase reaction, activating hydrogencarbonate by forming carboxy phosphate which reacts with ammonia to form carbamoyl phosphate. In Streptococcus sanguinis (strain SK36), this protein is Carbamoyl phosphate synthase large chain.